We begin with the raw amino-acid sequence, 208 residues long: Glycerol-3-phosphate acyltransferase (208 aa).

5 helical membrane-spanning segments follow: residues 3–23, 55–75, 81–101, 113–133, and 155–175; these read IIIMLIIAYLIGAIPSGVIIG, IVMVMDILKGTIAALQPTLLF, YTLLIGLAAILGHTFSIYIGF, ILLAYNWEFFLIASAIMLLLV, and IFYYQDWLLSLVAFALTLFIF.

It belongs to the PlsY family. In terms of assembly, probably interacts with PlsX.

Its subcellular location is the cell membrane. It carries out the reaction an acyl phosphate + sn-glycerol 3-phosphate = a 1-acyl-sn-glycero-3-phosphate + phosphate. Its pathway is lipid metabolism; phospholipid metabolism. Functionally, catalyzes the transfer of an acyl group from acyl-phosphate (acyl-PO(4)) to glycerol-3-phosphate (G3P) to form lysophosphatidic acid (LPA). This enzyme utilizes acyl-phosphate as fatty acyl donor, but not acyl-CoA or acyl-ACP. In Lactiplantibacillus plantarum (strain ATCC BAA-793 / NCIMB 8826 / WCFS1) (Lactobacillus plantarum), this protein is Glycerol-3-phosphate acyltransferase.